Here is a 554-residue protein sequence, read N- to C-terminus: CTP synthase (554 aa).

Residues 1 to 265 are amidoligase domain; that stretch reads MTPLIFVTGG…DELVIDQFKL (265 aa). Ser-13 is a binding site for CTP. Position 13 (Ser-13) interacts with UTP. Residues 14-19 and Asp-71 contribute to the ATP site; that span reads SLGKGI. Asp-71 and Glu-139 together coordinate Mg(2+). CTP is bound by residues 146–148, 186–191, and Lys-222; these read DIE and KTKPTQ. Residues 186 to 191 and Lys-222 contribute to the UTP site; that span reads KTKPTQ. Positions 292–545 constitute a Glutamine amidotransferase type-1 domain; it reads TIAVVGKYVD…VRAAREKKAG (254 aa). Gly-353 is an L-glutamine binding site. The Nucleophile; for glutamine hydrolysis role is filled by Cys-380. L-glutamine is bound by residues 381–384, Glu-404, and Arg-471; that span reads YGMQ. Residues His-518 and Glu-520 contribute to the active site.

It belongs to the CTP synthase family. As to quaternary structure, homotetramer.

It catalyses the reaction UTP + L-glutamine + ATP + H2O = CTP + L-glutamate + ADP + phosphate + 2 H(+). The enzyme catalyses L-glutamine + H2O = L-glutamate + NH4(+). The catalysed reaction is UTP + NH4(+) + ATP = CTP + ADP + phosphate + 2 H(+). It participates in pyrimidine metabolism; CTP biosynthesis via de novo pathway; CTP from UDP: step 2/2. Allosterically activated by GTP, when glutamine is the substrate; GTP has no effect on the reaction when ammonia is the substrate. The allosteric effector GTP functions by stabilizing the protein conformation that binds the tetrahedral intermediate(s) formed during glutamine hydrolysis. Inhibited by the product CTP, via allosteric rather than competitive inhibition. Functionally, catalyzes the ATP-dependent amination of UTP to CTP with either L-glutamine or ammonia as the source of nitrogen. Regulates intracellular CTP levels through interactions with the four ribonucleotide triphosphates. This Xanthomonas campestris pv. campestris (strain B100) protein is CTP synthase.